Reading from the N-terminus, the 291-residue chain is Basic helix-loop-helix protein 80 (291 aa).

Residues 65–120 (SAVLDTSPSVDRKRKAAEDSAHSKDSCKDGKSRRGKKASKEVEEKSTTEDEPPKGY) are disordered. Basic and acidic residues predominate over residues 80-117 (AAEDSAHSKDSCKDGKSRRGKKASKEVEEKSTTEDEPP). Residues 125-132 (ARRGQATD) carry the Nuclear localization signal motif. The segment at 129 to 142 (QATDSHSLAERVRR) is basic motif; degenerate. A bHLH domain is found at 129-179 (QATDSHSLAERVRRERISERMRMLQALVPGCDKVTGKALILDEIINYVQSL). A helix-loop-helix motif region spans residues 143–179 (ERISERMRMLQALVPGCDKVTGKALILDEIINYVQSL).

It belongs to the bHLH protein family. Homodimer. Interacts with IBH1, BC1 and LO9-177.

The protein resides in the nucleus. Functionally, together with BCL2, positive regulator of cell elongation at least partially through increased gibberellic acid (GA) biosynthesis. The chain is Basic helix-loop-helix protein 80 from Oryza sativa subsp. indica (Rice).